Here is a 786-residue protein sequence, read N- to C-terminus: DNA double-strand break repair Rad50 ATPase (786 aa).

Residues Lys13, 33 to 39 (NGSGKTT), and Gln138 each bind ATP. 3 coiled-coil regions span residues 194-249 (LKAE…LKSI), 337-455 (EKAK…RALE), and 551-650 (ALER…VKAL). In terms of domain architecture, Zinc-hook spans 366–459 (EIAELQNKIN…KIRALEKYKG (94 aa)). Residues Cys411 and Cys414 each coordinate Zn(2+).

It belongs to the SMC family. RAD50 subfamily. As to quaternary structure, homodimer. Forms a heterotetramer composed of two Mre11 subunits and two Rad50 subunits. Requires Zn(2+) as cofactor.

Functionally, part of the Rad50/Mre11 complex, which is involved in the early steps of DNA double-strand break (DSB) repair. The complex may facilitate opening of the processed DNA ends to aid in the recruitment of HerA and NurA. Rad50 controls the balance between DNA end bridging and DNA resection via ATP-dependent structural rearrangements of the Rad50/Mre11 complex. This chain is DNA double-strand break repair Rad50 ATPase, found in Nanoarchaeum equitans (strain Kin4-M).